We begin with the raw amino-acid sequence, 466 residues long: Alpha-1A adrenergic receptor (466 aa).

Residues 1–27 (MVLLSENASEGSNCTHPPAQVNISKAI) are Extracellular-facing. N-linked (GlcNAc...) asparagine glycans are attached at residues Asn-7, Asn-13, and Asn-22. A helical transmembrane segment spans residues 28-51 (LLGVILGGLIIFGVLGNILVILSV). Residues 52–64 (ACHRHLHSVTHYY) are Cytoplasmic-facing. Residues 65 to 88 (IVNLAVADLLLTSTVLPFSAIFEI) traverse the membrane as a helical segment. At 89–99 (LGYWAFGRVFC) the chain is on the extracellular side. Cys-99 and Cys-176 form a disulfide bridge. A helical membrane pass occupies residues 100–122 (NIWAAVDVLCCTASIMGLCIISI). The Cytoplasmic portion of the chain corresponds to 123–143 (DRYIGVSYPLRYPTIVTQRRG). A helical membrane pass occupies residues 144-167 (VRALLCVWALSLVISIGPLFGWRQ). Over 168–181 (QAPEDETICQINEE) the chain is Extracellular. The chain crosses the membrane as a helical span at residues 182–205 (PGYVLFSALGSFYVPLTIILVMYC). Residues 206-273 (RVYVVAKRES…FSREKKAAKT (68 aa)) are Cytoplasmic-facing. Ser-215 bears the Phosphoserine; by PKA mark. Residues 274–297 (LGIVVGCFVLCWLPFFLVMPIGSF) form a helical membrane-spanning segment. Residues 298–305 (FPNFKPPE) lie on the Extracellular side of the membrane. The chain crosses the membrane as a helical span at residues 306–329 (TVFKIVFWLGYLNSCINPIIYPCS). Residues 330–466 (SQEFKKAFQN…ISLGENGEEV (137 aa)) lie on the Cytoplasmic side of the membrane. The Nuclear localization signal motif lies at 334–349 (KKAFQNVLRIQCLRRR). A lipid anchor (S-palmitoyl cysteine) is attached at Cys-345.

It belongs to the G-protein coupled receptor 1 family. Adrenergic receptor subfamily. ADRA1A sub-subfamily. In terms of assembly, homo- and heterooligomer. Heterooligomerizes with ADRA1B homooligomers in cardiac myocytes. Interacts with CAVIN4.

It localises to the nucleus membrane. The protein localises to the cell membrane. Its subcellular location is the cytoplasm. It is found in the membrane. The protein resides in the caveola. Its function is as follows. This alpha-adrenergic receptor mediates its action by association with G proteins that activate a phosphatidylinositol-calcium second messenger system. Its effect is mediated by G(q) and G(11) proteins. Nuclear ADRA1A-ADRA1B heterooligomers regulate phenylephrine (PE)-stimulated ERK signaling in cardiac myocytes. This chain is Alpha-1A adrenergic receptor (Adra1a), found in Mus musculus (Mouse).